The following is a 496-amino-acid chain: MMFINLLLRLMCVFLIGADGQMVQMESSKAGFVGSQVELPCQFVNSNPPVKISQVTWQKLVNGTKQNVAIANPALGVSVLNPFRERVRFKNPAVRQRTPSLEDTTIVFNRLKLTDESTYICEYTTFPAGNRENMVNLTVFARPMIQMSLSTPSIVAGSKDLKMTVATCVSANGKPASVITWETDLDGESNTQEISNPDGTVTVRSDYFVVPSREIHQQLLTCISTYNEEQYTDSVTLNIQYEPEVIIEGFDGNWYLNRENVQLTCLADANPTISLYQWRYLNGTLPSSAELRDDVLIFKGPVTYDIAGTYVCDATNSIGSGSASVEVIVTEFPSYPHEVFQDQQQAGVVIGGAVVCGTVLLAAVTLLVVFLYRRRCMFKGDYSTKKQILGNGYSKAGNVPSHPSLPHSLTFSDDSDEEKKLELYRGSSILGGSVQEFHTCHDSRIKAYRTGLIEEHERCAFNEQTYIYEYGSEVEVSVDMIPQMDGSVISKEEWYV.

The N-terminal stretch at 1-20 (MMFINLLLRLMCVFLIGADG) is a signal peptide. The Extracellular portion of the chain corresponds to 21–349 (QMVQMESSKA…FQDQQQAGVV (329 aa)). In terms of domain architecture, Ig-like V-type spans 34–138 (GSQVELPCQF…GNRENMVNLT (105 aa)). Residues C41 and C121 are joined by a disulfide bond. N-linked (GlcNAc...) asparagine glycans are attached at residues N62 and N136. 2 consecutive Ig-like C2-type domains span residues 143-238 (PMIQ…VTLN) and 243-330 (PEVI…VIVT). 2 disulfides stabilise this stretch: C168–C222 and C265–C312. N282 carries an N-linked (GlcNAc...) asparagine glycan. Residues 350 to 370 (IGGAVVCGTVLLAAVTLLVVF) form a helical membrane-spanning segment. At 371 to 496 (LYRRRCMFKG…SVISKEEWYV (126 aa)) the chain is on the cytoplasmic side.

The protein belongs to the nectin family. As to quaternary structure, cis- and trans-homodimer. Can form trans-heterodimers. Expressed in the developing eye and nervous system.

Its subcellular location is the cell membrane. The protein localises to the cell junction. It is found in the adherens junction. Cell adhesion molecule that promotes cell-cell contacts and plays important roles in the development of the nervous system. Acts by forming homophilic or heterophilic trans-dimers. This chain is Nectin 1a, found in Danio rerio (Zebrafish).